Here is a 258-residue protein sequence, read N- to C-terminus: Imidazole glycerol phosphate synthase subunit HisF (258 aa).

Catalysis depends on residues Asp11 and Asp130.

Belongs to the HisA/HisF family. As to quaternary structure, heterodimer of HisH and HisF.

The protein resides in the cytoplasm. It catalyses the reaction 5-[(5-phospho-1-deoxy-D-ribulos-1-ylimino)methylamino]-1-(5-phospho-beta-D-ribosyl)imidazole-4-carboxamide + L-glutamine = D-erythro-1-(imidazol-4-yl)glycerol 3-phosphate + 5-amino-1-(5-phospho-beta-D-ribosyl)imidazole-4-carboxamide + L-glutamate + H(+). It participates in amino-acid biosynthesis; L-histidine biosynthesis; L-histidine from 5-phospho-alpha-D-ribose 1-diphosphate: step 5/9. Functionally, IGPS catalyzes the conversion of PRFAR and glutamine to IGP, AICAR and glutamate. The HisF subunit catalyzes the cyclization activity that produces IGP and AICAR from PRFAR using the ammonia provided by the HisH subunit. This Rhodopseudomonas palustris (strain BisB18) protein is Imidazole glycerol phosphate synthase subunit HisF.